Consider the following 337-residue polypeptide: Heat-inducible transcription repressor HrcA (337 aa).

Belongs to the HrcA family.

Its function is as follows. Negative regulator of class I heat shock genes (grpE-dnaK-dnaJ and groELS operons). Prevents heat-shock induction of these operons. In Polaromonas naphthalenivorans (strain CJ2), this protein is Heat-inducible transcription repressor HrcA.